Reading from the N-terminus, the 227-residue chain is Ribonuclease 3 (227 aa).

Residues 7 to 132 enclose the RNase III domain; sequence LTAFMDRLGY…VIAAVYLDGG (126 aa). Glu-45 contacts Mg(2+). The active site involves Asp-49. 2 residues coordinate Mg(2+): Asp-118 and Glu-121. The active site involves Glu-121. The region spanning 157-226 is the DRBM domain; that stretch reads DAKTALQEWA…AKDLLAQLAG (70 aa).

This sequence belongs to the ribonuclease III family. In terms of assembly, homodimer. The cofactor is Mg(2+).

Its subcellular location is the cytoplasm. The enzyme catalyses Endonucleolytic cleavage to 5'-phosphomonoester.. Its function is as follows. Digests double-stranded RNA. Involved in the processing of primary rRNA transcript to yield the immediate precursors to the large and small rRNAs (23S and 16S). Processes some mRNAs, and tRNAs when they are encoded in the rRNA operon. Processes pre-crRNA and tracrRNA of type II CRISPR loci if present in the organism. The polypeptide is Ribonuclease 3 (Jannaschia sp. (strain CCS1)).